A 304-amino-acid polypeptide reads, in one-letter code: Galactofuranosyltransferase GlfT1 (304 aa).

This sequence belongs to the glycosyltransferase 2 family. As to quaternary structure, is probably part of an AG biosynthetic complex.

The protein resides in the cell membrane. The protein localises to the secreted. It localises to the cell wall. It carries out the reaction alpha-L-rhamnosyl-(1-&gt;3)-N-acetyl-alpha-D-glucosaminyl-diphospho-trans,octa-cis-decaprenol + 2 UDP-alpha-D-galactofuranose = beta-D-galactofuranosyl-(1-&gt;5)-beta-D-galactofuranosyl-(1-&gt;4)-alpha-L-rhamnosyl-(1-&gt;3)-N-acetyl-alpha-D-glucosaminyl-diphospho-trans,octa-cis-decaprenol + 2 UDP + 2 H(+). Its pathway is cell wall biogenesis; cell wall polysaccharide biosynthesis. Functionally, involved in the biosynthesis of the arabinogalactan (AG) region of the mycolylarabinogalactan-peptidoglycan (mAGP) complex, an essential component of the mycobacterial cell wall. Catalyzes the transfer of the first two galactofuranosyl (Galf) units from UDP-galactofuranose (UDP-Galf) onto the rhamnosyl-GlcNAc-diphospho-decaprenol (Rha-GlcNAc-PP-C50) acceptor, yielding galactofuranosyl-galactofuranosyl-rhamnosyl-GlcNAc-diphospho-decaprenol (Galf-Galf-Rha-GlcNAc-PP-C50). Thus, GlfT1 is the initiator of galactan synthesis, while GlfT2 continues with the subsequent polymerization events. The protein is Galactofuranosyltransferase GlfT1 of Mycobacterium tuberculosis (strain CDC 1551 / Oshkosh).